A 322-amino-acid polypeptide reads, in one-letter code: Large ribosomal subunit protein uL15m (322 aa).

Residues 1 to 57 constitute a mitochondrion transit peptide; the sequence is MKAERQTGLRNSFTTVIGRKLINTFVPSMMLTSVAGNDIFFRGLFKSPVLAFQSYRY. Residues 69-99 are disordered; it reads GSTKSFKRLGRGPSSGLGKTSGRGQKGQKAR. Positions 81-93 are enriched in gly residues; sequence PSSGLGKTSGRGQ.

It belongs to the universal ribosomal protein uL15 family. Component of the mitochondrial large ribosomal subunit (mt-LSU). Mature yeast 74S mitochondrial ribosomes consist of a small (37S) and a large (54S) subunit. The 37S small subunit contains a 15S ribosomal RNA (15S mt-rRNA) and 34 different proteins. The 54S large subunit contains a 21S rRNA (21S mt-rRNA) and 46 different proteins.

The protein resides in the mitochondrion. In terms of biological role, component of the mitochondrial ribosome (mitoribosome), a dedicated translation machinery responsible for the synthesis of mitochondrial genome-encoded proteins, including at least some of the essential transmembrane subunits of the mitochondrial respiratory chain. The mitoribosomes are attached to the mitochondrial inner membrane and translation products are cotranslationally integrated into the membrane. In Saccharomyces cerevisiae (strain ATCC 204508 / S288c) (Baker's yeast), this protein is Large ribosomal subunit protein uL15m (MRPL10).